Here is a 51-residue protein sequence, read N- to C-terminus: Sperm protamine P1 (51 aa).

It belongs to the protamine P1 family. Testis.

It localises to the nucleus. The protein resides in the chromosome. Its function is as follows. Protamines substitute for histones in the chromatin of sperm during the haploid phase of spermatogenesis. They compact sperm DNA into a highly condensed, stable and inactive complex. This is Sperm protamine P1 (PRM1) from Colobus guereza (Mantled guereza).